A 278-amino-acid polypeptide reads, in one-letter code: Large ribosomal subunit protein uL2 (278 aa).

2 stretches are compositionally biased toward basic residues: residues 210 to 220 (GRMRWKGKRPS) and 257 to 278 (TRRK…NKKR). Positions 210-278 (GRMRWKGKRP…VRRRKSNKKR (69 aa)) are disordered.

It belongs to the universal ribosomal protein uL2 family. As to quaternary structure, part of the 50S ribosomal subunit. Forms a bridge to the 30S subunit in the 70S ribosome.

One of the primary rRNA binding proteins. Required for association of the 30S and 50S subunits to form the 70S ribosome, for tRNA binding and peptide bond formation. It has been suggested to have peptidyltransferase activity; this is somewhat controversial. Makes several contacts with the 16S rRNA in the 70S ribosome. This Acidothermus cellulolyticus (strain ATCC 43068 / DSM 8971 / 11B) protein is Large ribosomal subunit protein uL2.